The sequence spans 249 residues: Type III pantothenate kinase (249 aa).

8 to 15 (DAGNSRLK) is an ATP binding site. Substrate contacts are provided by residues Tyr-95 and 102 to 105 (GVDR). Asp-104 acts as the Proton acceptor in catalysis. Asp-125 contacts K(+). Thr-128 contacts ATP. Thr-179 serves as a coordination point for substrate.

It belongs to the type III pantothenate kinase family. Homodimer. NH4(+) serves as cofactor. The cofactor is K(+).

It is found in the cytoplasm. The enzyme catalyses (R)-pantothenate + ATP = (R)-4'-phosphopantothenate + ADP + H(+). The protein operates within cofactor biosynthesis; coenzyme A biosynthesis; CoA from (R)-pantothenate: step 1/5. Functionally, catalyzes the phosphorylation of pantothenate (Pan), the first step in CoA biosynthesis. The protein is Type III pantothenate kinase of Alkalilimnicola ehrlichii (strain ATCC BAA-1101 / DSM 17681 / MLHE-1).